The chain runs to 144 residues: Large ribosomal subunit protein uL15 (144 aa).

Residues methionine 1–glycine 53 form a disordered region. Residues arginine 21–glycine 31 show a composition bias toward gly residues.

The protein belongs to the universal ribosomal protein uL15 family. Part of the 50S ribosomal subunit.

In terms of biological role, binds to the 23S rRNA. This is Large ribosomal subunit protein uL15 from Mannheimia succiniciproducens (strain KCTC 0769BP / MBEL55E).